Reading from the N-terminus, the 430-residue chain is Glutamate-1-semialdehyde 2,1-aminomutase (430 aa).

Lys-267 bears the N6-(pyridoxal phosphate)lysine mark.

The protein belongs to the class-III pyridoxal-phosphate-dependent aminotransferase family. HemL subfamily. As to quaternary structure, homodimer. The cofactor is pyridoxal 5'-phosphate.

It localises to the cytoplasm. It catalyses the reaction (S)-4-amino-5-oxopentanoate = 5-aminolevulinate. It participates in porphyrin-containing compound metabolism; protoporphyrin-IX biosynthesis; 5-aminolevulinate from L-glutamyl-tRNA(Glu): step 2/2. The protein is Glutamate-1-semialdehyde 2,1-aminomutase of Natranaerobius thermophilus (strain ATCC BAA-1301 / DSM 18059 / JW/NM-WN-LF).